Reading from the N-terminus, the 104-residue chain is Nucleoid-associated protein Dtur_0258 (104 aa).

Residues 84–104 (EKSAEKMGSLTDGLPLPPGLF) form a disordered region.

It belongs to the YbaB/EbfC family. Homodimer.

The protein localises to the cytoplasm. Its subcellular location is the nucleoid. Binds to DNA and alters its conformation. May be involved in regulation of gene expression, nucleoid organization and DNA protection. The sequence is that of Nucleoid-associated protein Dtur_0258 from Dictyoglomus turgidum (strain DSM 6724 / Z-1310).